A 463-amino-acid chain; its full sequence is Quinolone resistance protein NorB (463 aa).

Transmembrane regions (helical) follow at residues 17–37, 53–73, 86–106, 107–127, 142–162, 165–185, 201–221, 230–250, 273–293, 299–319, 334–354, 357–377, 403–423, and 435–455; these read IGIVLSVITFWLFAQSLVNVV, IAVSITALFSGMFVVGAGGLA, IILNILGSLLIIISNIPLLLI, IGRLIQGLSAACIMPATLSII, YWSIGSWGGSGVCSFFGGAVA, LGWRWIFILSIIISLIALFLI, FDIKGLVLLVIMLLSLNILIT, SLLFITILAIAIVSFSLFIVL, TASNFLLNGVAGTLIVANTFV, YSSLQAGSLSITYLVMVLIMI, PMLIGTAVLIVGECLISLTFL, ILYVICCIIGYLFFGLGLGIY, MASALGGAFGVALSGAVYAIV, and IALWLNAGMGILSFVIILLLV.

The protein belongs to the major facilitator superfamily. TCR/Tet family.

It is found in the cell membrane. Multidrug efflux pump that acts independently of NorA and is one of the factors that confers resistance against diverse quinolones and chemical compounds. In Staphylococcus aureus (strain MRSA252), this protein is Quinolone resistance protein NorB (norB).